The chain runs to 223 residues: Agamous-like MADS-box protein AGL11 (223 aa).

Residues 1–61 enclose the MADS-box domain; that stretch reads MGRGKIEIKR…GRVYEYSNNN (61 aa). Residues 87-177 form the K-box domain; the sequence is AQYYQQESAK…RTKIAEVERL (91 aa).

It localises to the nucleus. Probable transcription factor involved in seed development. The sequence is that of Agamous-like MADS-box protein AGL11 from Vitis vinifera (Grape).